A 466-amino-acid chain; its full sequence is Phytase A (466 aa).

Positions 1–19 (MGVFVVLLSIATLFGSTSG) are cleaved as a signal peptide. Residue asparagine 27 is glycosylated (N-linked (GlcNAc...) asparagine). Cysteine 31 and cysteine 40 are oxidised to a cystine. 1D-myo-inositol hexakisphosphate is bound by residues tyrosine 51, arginine 81, histidine 82, arginine 85, and threonine 88. 4 disulfide bridges follow: cysteine 71/cysteine 414, cysteine 215/cysteine 465, cysteine 264/cysteine 282, and cysteine 436/cysteine 444. Residue histidine 82 is the Nucleophile of the active site. 2 N-linked (GlcNAc...) asparagine glycosylation sites follow: asparagine 105 and asparagine 120. Residue arginine 165 participates in 1D-myo-inositol hexakisphosphate binding. N-linked (GlcNAc...) asparagine glycans are attached at residues asparagine 207 and asparagine 230. Residue lysine 301 coordinates 1D-myo-inositol hexakisphosphate. N-linked (GlcNAc...) asparagine glycosylation is found at asparagine 339 and asparagine 352. Residues histidine 361 and aspartate 362 each contribute to the 1D-myo-inositol hexakisphosphate site. A glycan (N-linked (GlcNAc...) asparagine) is linked at asparagine 376.

The protein belongs to the histidine acid phosphatase family. In terms of assembly, monomer.

It localises to the secreted. It catalyses the reaction 1D-myo-inositol hexakisphosphate + H2O = 1D-myo-inositol 1,2,4,5,6-pentakisphosphate + phosphate. The enzyme catalyses 1D-myo-inositol 1,2,4,5,6-pentakisphosphate + H2O = 1D-myo-inositol 1,2,5,6-tetrakisphosphate + phosphate. The catalysed reaction is 1D-myo-inositol 1,2,5,6-tetrakisphosphate + H2O = 1D-myo-inositol 1,2,6-trisphosphate + phosphate. It carries out the reaction 1D-myo-inositol 1,2,6-trisphosphate + H2O = 1D-myo-inositol 1,2-bisphosphate + phosphate. It catalyses the reaction 1D-myo-inositol 1,2-bisphosphate + H2O = 1D-myo-inositol 2-phosphate + phosphate. Functionally, catalyzes the phosphate monoester hydrolysis of phytic acid (myo-inositol hexakisphosphate), which results in the stepwise formation of myo-inositol pentakis-, tetrakis-, tris-, bis-, and monophosphates, as well as the liberation of inorganic phosphate. Myo-inositol 2-monophosphate is the end product. Has a broad substrate specificity and is also able to dephosphorylate other classic acid phosphatase substrates such as p-nitrophenyl phosphate, phenyl phosphate, fructose 1,6-bisphosphate, glucose 6-phosphate, 3-phosphoglycerate, as well as ADP and ATP. The sequence is that of Phytase A from Aspergillus terreus.